A 509-amino-acid chain; its full sequence is UDP-N-acetylmuramyl-tripeptide synthetase (509 aa).

ATP is bound at residue 124 to 130 (GTNGKTS). Residues 164-165 (TT), serine 191, and arginine 199 each bind UDP-N-acetyl-alpha-D-muramoyl-L-alanyl-D-glutamate. At lysine 231 the chain carries N6-carboxylysine.

Belongs to the MurCDEF family. MurE subfamily. Post-translationally, carboxylation is probably crucial for Mg(2+) binding and, consequently, for the gamma-phosphate positioning of ATP.

Its subcellular location is the cytoplasm. It functions in the pathway cell wall biogenesis; peptidoglycan biosynthesis. In terms of biological role, catalyzes the addition of an amino acid to the nucleotide precursor UDP-N-acetylmuramoyl-L-alanyl-D-glutamate (UMAG) in the biosynthesis of bacterial cell-wall peptidoglycan. This Tropheryma whipplei (strain Twist) (Whipple's bacillus) protein is UDP-N-acetylmuramyl-tripeptide synthetase.